Consider the following 260-residue polypeptide: 4-hydroxy-tetrahydrodipicolinate reductase (260 aa).

12–17 is a binding site for NAD(+); that stretch reads GFRGKM. An NADP(+)-binding site is contributed by Lys40. Residues 92-94 and 118-121 contribute to the NAD(+) site; these read GTT and APNF. His148 (proton donor/acceptor) is an active-site residue. His149 provides a ligand contact to (S)-2,3,4,5-tetrahydrodipicolinate. Lys152 functions as the Proton donor in the catalytic mechanism. 158 to 159 is a binding site for (S)-2,3,4,5-tetrahydrodipicolinate; that stretch reads GT.

It belongs to the DapB family.

The protein localises to the cytoplasm. The enzyme catalyses (S)-2,3,4,5-tetrahydrodipicolinate + NAD(+) + H2O = (2S,4S)-4-hydroxy-2,3,4,5-tetrahydrodipicolinate + NADH + H(+). The catalysed reaction is (S)-2,3,4,5-tetrahydrodipicolinate + NADP(+) + H2O = (2S,4S)-4-hydroxy-2,3,4,5-tetrahydrodipicolinate + NADPH + H(+). Its pathway is amino-acid biosynthesis; L-lysine biosynthesis via DAP pathway; (S)-tetrahydrodipicolinate from L-aspartate: step 4/4. Catalyzes the conversion of 4-hydroxy-tetrahydrodipicolinate (HTPA) to tetrahydrodipicolinate. This is 4-hydroxy-tetrahydrodipicolinate reductase from Lactococcus lactis subsp. lactis (strain IL1403) (Streptococcus lactis).